A 460-amino-acid chain; its full sequence is MTTKEQFFFKGATSKNKIHFISLGCSRNLVDSEVMLGILLKAGYEATELLREADYLILNTCGFLKAARDESTDYLQRIINEKKETAKIILTGCMVSKHKEELKPWLPYVHYVLGSGDVEHILSAIESKESGEKLSSKSYLEMGEVPRKLSTPKHYAYLKIAEGCRKRCAFCIIPTIKGGLRSKPLEQVMKEFRLLLKMGVKEIILIAQDLGDYGKDLSKDRKSCLYSVLREMLKEPGNYWIRMLYLYPDEVDDTLIDLMEKDQRLLPYVDIPLQHINNRVLKKMLRTTSREQILDLLTKLRTRIPHIYIRSSLIVGFPGETEEEFQELVNFVGEGWIDNLGIFSYSQEKGSLAAEMPDQIPQSVKSKRLKILSQTQKKNVEKHNKQFVGKIVEAVIDGYHPDSEFLLTARFYGQAPEVDPCIIVNEARLVSGFGERYLIEITGYVGYDLVGRVVNKVPGE.

Residues 16–130 form the MTTase N-terminal domain; it reads NKIHFISLGC…ILSAIESKES (115 aa). 6 residues coordinate [4Fe-4S] cluster: Cys-25, Cys-61, Cys-93, Cys-164, Cys-168, and Cys-171. The Radical SAM core domain occupies 150–382; the sequence is STPKHYAYLK…SQTQKKNVEK (233 aa). Residues 385 to 455 form the TRAM domain; it reads KQFVGKIVEA…GYDLVGRVVN (71 aa).

This sequence belongs to the methylthiotransferase family. RimO subfamily. It depends on [4Fe-4S] cluster as a cofactor.

The protein resides in the cytoplasm. The catalysed reaction is L-aspartate(89)-[ribosomal protein uS12]-hydrogen + (sulfur carrier)-SH + AH2 + 2 S-adenosyl-L-methionine = 3-methylsulfanyl-L-aspartate(89)-[ribosomal protein uS12]-hydrogen + (sulfur carrier)-H + 5'-deoxyadenosine + L-methionine + A + S-adenosyl-L-homocysteine + 2 H(+). Its function is as follows. Catalyzes the methylthiolation of an aspartic acid residue of ribosomal protein uS12. The chain is Ribosomal protein uS12 methylthiotransferase RimO from Chlamydia abortus (strain DSM 27085 / S26/3) (Chlamydophila abortus).